Reading from the N-terminus, the 963-residue chain is uncharacterized protein (963 aa).

2 coiled-coil regions span residues 176–236 (NGRN…HIRM) and 373–467 (DYEW…KKTV). A helical transmembrane segment spans residues 468–488 (IAAGMLFIVLFSLLQQWIPAI). Coiled-coil stretches lie at residues 536–570 (RNKQ…AEMA) and 647–789 (ALHT…LEAS).

Its subcellular location is the cell membrane. This is an uncharacterized protein from Bacillus subtilis (strain 168).